The following is an 899-amino-acid chain: Alanine--tRNA ligase, chloroplastic/mitochondrial (899 aa).

Histidine 581, histidine 585, cysteine 683, and histidine 687 together coordinate Zn(2+).

The protein belongs to the class-II aminoacyl-tRNA synthetase family. In terms of assembly, monomer. Requires Zn(2+) as cofactor.

The protein resides in the plastid. It is found in the chloroplast. The protein localises to the mitochondrion. The catalysed reaction is tRNA(Ala) + L-alanine + ATP = L-alanyl-tRNA(Ala) + AMP + diphosphate. In terms of biological role, catalyzes the attachment of alanine to tRNA(Ala) in a two-step reaction: alanine is first activated by ATP to form Ala-AMP and then transferred to the acceptor end of tRNA(Ala). Also edits incorrectly charged tRNA(Ala) via its editing domain. The chain is Alanine--tRNA ligase, chloroplastic/mitochondrial from Micromonas pusilla (strain CCMP1545) (Picoplanktonic green alga).